Consider the following 218-residue polypeptide: Radial spoke head 1 homolog (218 aa).

The segment covering 1 to 13 has biased composition (acidic residues); that stretch reads MSDAGTEEFDEEQ. A disordered region spans residues 1 to 48; the sequence is MSDAGTEEFDEEQGSLGEYEGDRNEAGERHGQGKAVLPRGDTYQGAYE. 6 MORN repeats span residues 19–42, 43–65, 66–88, 89–111, 112–134, and 158–180; these read YEGD…RGDT, YQGA…NGAR, YTGE…DGSK, YEGS…NGDT, YDGE…ETGS, and YHGN…IGCE. Basic and acidic residues predominate over residues 20–31; the sequence is EGDRNEAGERHG.

In terms of assembly, component of the axonemal radial spoke complexes. Interacts with septin SEPT7. As to expression, testis-specific.

Its subcellular location is the cytoplasm. The protein resides in the cytoskeleton. It localises to the cilium axoneme. The protein localises to the flagellum basal body. It is found in the flagellum axoneme. In terms of biological role, functions as part of axonemal radial spoke complexes that play an important part in the motility of sperm and cilia. The protein is Radial spoke head 1 homolog (rsph1) of Cyprinus carpio (Common carp).